The primary structure comprises 296 residues: Homoserine kinase (296 aa).

Position 85 to 95 (85 to 95) interacts with ATP; it reads PVARGLGSSAA.

This sequence belongs to the GHMP kinase family. Homoserine kinase subfamily.

The protein localises to the cytoplasm. It carries out the reaction L-homoserine + ATP = O-phospho-L-homoserine + ADP + H(+). The protein operates within amino-acid biosynthesis; L-threonine biosynthesis; L-threonine from L-aspartate: step 4/5. Functionally, catalyzes the ATP-dependent phosphorylation of L-homoserine to L-homoserine phosphate. The protein is Homoserine kinase of Moorella thermoacetica (strain ATCC 39073 / JCM 9320).